The chain runs to 189 residues: Elongation factor P 2 (189 aa).

It belongs to the elongation factor P family.

It is found in the cytoplasm. The protein operates within protein biosynthesis; polypeptide chain elongation. Its function is as follows. Involved in peptide bond synthesis. Stimulates efficient translation and peptide-bond synthesis on native or reconstituted 70S ribosomes in vitro. Probably functions indirectly by altering the affinity of the ribosome for aminoacyl-tRNA, thus increasing their reactivity as acceptors for peptidyl transferase. The protein is Elongation factor P 2 of Mesorhizobium japonicum (strain LMG 29417 / CECT 9101 / MAFF 303099) (Mesorhizobium loti (strain MAFF 303099)).